Reading from the N-terminus, the 98-residue chain is NADH-ubiquinone oxidoreductase chain 4L (98 aa).

3 helical membrane-spanning segments follow: residues 1-21, 28-48, and 59-79; these read MMSINLNLIMAFSLALAGVLI, STLLCLEGMMLSLFILMALLI, and APLVLLVFSACEAGVGLALLV.

It belongs to the complex I subunit 4L family. Core subunit of respiratory chain NADH dehydrogenase (Complex I) which is composed of 45 different subunits.

The protein resides in the mitochondrion inner membrane. It catalyses the reaction a ubiquinone + NADH + 5 H(+)(in) = a ubiquinol + NAD(+) + 4 H(+)(out). Functionally, core subunit of the mitochondrial membrane respiratory chain NADH dehydrogenase (Complex I) which catalyzes electron transfer from NADH through the respiratory chain, using ubiquinone as an electron acceptor. Part of the enzyme membrane arm which is embedded in the lipid bilayer and involved in proton translocation. The chain is NADH-ubiquinone oxidoreductase chain 4L (MT-ND4L) from Pseudocheirus peregrinus (Common ring-tailed possum).